A 259-amino-acid chain; its full sequence is MGRGKIEIKRIENSTNRQVTFSKRRGGLLKKANELAVLCDARVGVVIFSSTGKMFEYCSPACSLRELIEQYQHATNSHFEEINHDQQILLEMTRMKNEMEKLETGIRRYTGDDLSSLTLDDVSDLEQQLEYSVSKVRARKHQLLNQQLDNLRRKEQILEDQNTFLYRMINENQQAALTGEVKLGEMAPLAMLQPPPAFAHSATAYYGGESSSSGTALQLMSAAPQLHADDLGFRLQPTQPNLQDPAAPCGGLHGHGLQL.

In terms of domain architecture, MADS-box spans 1 to 61 (MGRGKIEIKR…GKMFEYCSPA (61 aa)). The 91-residue stretch at 85–175 (DQQILLEMTR…YRMINENQQA (91 aa)) folds into the K-box domain. Residues 237-259 (PTQPNLQDPAAPCGGLHGHGLQL) form a disordered region.

As to expression, strong expression in female inflorescences (ears), but also weak expression in male inflorescences (tassels). At early stages of the development of the female spiklet, expressed in all organ primordia but later restricted to the ovule and the developing silk. At very late stages of development, expression becomes restricted to parts of the silk.

It localises to the nucleus. Probable transcription factor. The sequence is that of MADS-box protein ZMM17 (M17) from Zea mays (Maize).